The primary structure comprises 190 residues: Elongation factor P-like protein (190 aa).

Belongs to the elongation factor P family.

This is Elongation factor P-like protein from Klebsiella pneumoniae subsp. pneumoniae (strain ATCC 700721 / MGH 78578).